A 160-amino-acid chain; its full sequence is MGVFNYEAETTSVIPAARLFKAFILDGNKLIPKVSPQAVSSVENVEGNGGPGTIKKITFSEGSPVKYVKERVEEIDHTNFKYNYTVIEGDVLGDKLEKVSHELKIVAAPGGGSIVKISSKFHAKGYHEVNAEEMKGAKEMAEKLLRAVESYLLAHTAEYN.

This sequence belongs to the BetVI family.

The protein is Major pollen allergen Car b 1 isoform 2 of Carpinus betulus (European hornbeam).